Consider the following 250-residue polypeptide: Ribonuclease PH (250 aa).

Phosphate is bound by residues Arg87 and 125-127; that span reads GTR.

This sequence belongs to the RNase PH family. As to quaternary structure, homohexameric ring arranged as a trimer of dimers.

The catalysed reaction is tRNA(n+1) + phosphate = tRNA(n) + a ribonucleoside 5'-diphosphate. In terms of biological role, phosphorolytic 3'-5' exoribonuclease that plays an important role in tRNA 3'-end maturation. Removes nucleotide residues following the 3'-CCA terminus of tRNAs; can also add nucleotides to the ends of RNA molecules by using nucleoside diphosphates as substrates, but this may not be physiologically important. Probably plays a role in initiation of 16S rRNA degradation (leading to ribosome degradation) during starvation. The protein is Ribonuclease PH of Moorella thermoacetica (strain ATCC 39073 / JCM 9320).